A 189-amino-acid chain; its full sequence is Ribosome-recycling factor (189 aa).

Belongs to the RRF family.

Its subcellular location is the cytoplasm. Responsible for the release of ribosomes from messenger RNA at the termination of protein biosynthesis. May increase the efficiency of translation by recycling ribosomes from one round of translation to another. This Salinibacter ruber (strain DSM 13855 / M31) protein is Ribosome-recycling factor.